Here is a 218-residue protein sequence, read N- to C-terminus: Adenylate kinase (218 aa).

10–15 (GAGKGT) contributes to the ATP binding site. The NMP stretch occupies residues 30–59 (STGDMFRAAMANQTEMGRLAKSFIDKGELV). AMP contacts are provided by residues Thr31, Arg36, 57-59 (ELV), 86-89 (GYPR), and Gln93. The interval 127-165 (GRFICRSCGSTYHKVFNPTKVEGTCDVCGGHEFFQREDD) is LID. Arg128 provides a ligand contact to ATP. Cys131 and Cys134 together coordinate Zn(2+). 137-138 (TY) serves as a coordination point for ATP. Zn(2+) contacts are provided by Cys151 and Cys154. 2 residues coordinate AMP: Arg162 and Arg173. Gln201 is a binding site for ATP.

This sequence belongs to the adenylate kinase family. Monomer.

The protein resides in the cytoplasm. It catalyses the reaction AMP + ATP = 2 ADP. It participates in purine metabolism; AMP biosynthesis via salvage pathway; AMP from ADP: step 1/1. Its function is as follows. Catalyzes the reversible transfer of the terminal phosphate group between ATP and AMP. Plays an important role in cellular energy homeostasis and in adenine nucleotide metabolism. This is Adenylate kinase from Streptococcus thermophilus (strain CNRZ 1066).